Consider the following 125-residue polypeptide: Natriuretic peptide GNP1 (125 aa).

The first 25 residues, 1–25 (MDPRLVRAGSLVLLLALLVQDQGAA), serve as a signal peptide directing secretion. Disordered stretches follow at residues 23–78 (GAAH…PAFK) and 105–125 (VSGM…TGKK). The propeptide occupies 26–85 (HPARAGQKYKPLIRRSEEDSQALGQEGDVAARAADEEEDAAGPGDALRQPAFKTLLASRE). The cysteines at positions 94 and 110 are disulfide-linked.

The protein belongs to the natriuretic peptide family. Expressed by the venom gland.

It is found in the secreted. Exhibits natriuretic and vasodepressor activity. Acts by stimulating cGMP. This Varanus varius (Lace monitor lizard) protein is Natriuretic peptide GNP1.